A 798-amino-acid chain; its full sequence is Type 2 DNA topoisomerase 6 subunit B (798 aa).

ATP-binding positions include asparagine 60, aspartate 91, 112–113 (SR), and 122–129 (GQQGIGIS). Residues 221–233 (EPEDSFKSERATE) are compositionally biased toward basic and acidic residues. Positions 221–245 (EPEDSFKSERATEELPPETEEIRPH) are disordered. Lysine 629 contributes to the ATP binding site.

Belongs to the TOP6B family. As to quaternary structure, homodimer. Heterotetramer of two Top6A and two Top6B chains.

It catalyses the reaction ATP-dependent breakage, passage and rejoining of double-stranded DNA.. Functionally, relaxes both positive and negative superturns and exhibits a strong decatenase activity. The protein is Type 2 DNA topoisomerase 6 subunit B of Natronomonas pharaonis (strain ATCC 35678 / DSM 2160 / CIP 103997 / JCM 8858 / NBRC 14720 / NCIMB 2260 / Gabara) (Halobacterium pharaonis).